A 72-amino-acid chain; its full sequence is PI-stichotoxin-Hcr2j (72 aa).

The signal sequence occupies residues 1 to 9 (GFYFRSIQG). Positions 10-17 (FYFKRIQG) are excised as a propeptide. Residues 20 to 70 (CSEPKKVGRCRESFPRFYFDSETGKCTPFIYGGCGGNGNNFETLHACRAIC) form the BPTI/Kunitz inhibitor domain. Intrachain disulfides connect cysteine 20–cysteine 70, cysteine 29–cysteine 53, and cysteine 45–cysteine 66.

Belongs to the venom Kunitz-type family. Sea anemone type 2 potassium channel toxin subfamily.

It localises to the secreted. The protein localises to the nematocyst. In terms of biological role, serine protease inhibitor that acts on trypsin (Ki=190 nM) and to elastase. Does not bind to alpha-chymotrypsin, cathepsin G, and kallikrein. It significantly increases neuroblastoma cell viability in an in vitro neurotoxicity model, being a consequence of an effective decrease of reactive oxygen species (ROS) level in the cells. It also protects cells by inhibiting ATP-induced purinoceptor activation. Its binding affinity to P2RX7 is moderate (Kd=45.5 uM). The protein is PI-stichotoxin-Hcr2j of Radianthus crispa (Leathery sea anemone).